The chain runs to 156 residues: ATP synthase subunit b (156 aa).

A helical membrane pass occupies residues 7 to 27 (LIGQLIAFAIFVWFCMKYVWP).

The protein belongs to the ATPase B chain family. F-type ATPases have 2 components, F(1) - the catalytic core - and F(0) - the membrane proton channel. F(1) has five subunits: alpha(3), beta(3), gamma(1), delta(1), epsilon(1). F(0) has three main subunits: a(1), b(2) and c(10-14). The alpha and beta chains form an alternating ring which encloses part of the gamma chain. F(1) is attached to F(0) by a central stalk formed by the gamma and epsilon chains, while a peripheral stalk is formed by the delta and b chains.

The protein resides in the cell inner membrane. Its function is as follows. F(1)F(0) ATP synthase produces ATP from ADP in the presence of a proton or sodium gradient. F-type ATPases consist of two structural domains, F(1) containing the extramembraneous catalytic core and F(0) containing the membrane proton channel, linked together by a central stalk and a peripheral stalk. During catalysis, ATP synthesis in the catalytic domain of F(1) is coupled via a rotary mechanism of the central stalk subunits to proton translocation. In terms of biological role, component of the F(0) channel, it forms part of the peripheral stalk, linking F(1) to F(0). This Histophilus somni (strain 129Pt) (Haemophilus somnus) protein is ATP synthase subunit b.